Here is a 497-residue protein sequence, read N- to C-terminus: uncharacterized protein (497 aa).

The disordered stretch occupies residues 58–79 (ISTRSFRNDGNDSDPQTLDPDA). Transmembrane regions (helical) follow at residues 86–106 (IAFV…ALPI), 120–140 (FSGL…YPML), 155–175 (FRPL…YSLA), 180–200 (WLYL…MFLY), 222–242 (LNIL…GLLA), 258–278 (VGSW…SIFF), 309–329 (FMLV…AGYQ), 348–368 (GNFL…STFL), 378–398 (MLYG…LDVL), 407–427 (FVLY…LISL), 438–458 (ILVG…GAIC), and 468–488 (VGFI…LLFL).

The protein belongs to the major facilitator superfamily.

The protein localises to the membrane. This is an uncharacterized protein from Schizosaccharomyces pombe (strain 972 / ATCC 24843) (Fission yeast).